The primary structure comprises 1613 residues: MAAATVVVPAEWIKNWEKSGRGEFLHLCRILSENKGHDSSTYRDFQQALYELSYHVIKGNLKHEQASNVLNDISEFREDMPSILADVFCILDIETNCLEEKSKRDYFTQLVLACLYLVSDTVLKERLDPETLESLGLIKQSQQFNQKSVKIKTKLFYKQQKFNLLREENEGYAKLIAELGQDLSGNITSDLILENIKSLIGCFNLDPNRVLDVILEVFECRPEHDDFFISLLESYMSMCEPQTLCHILGFKFKFYQEPNGETPSSLYRVAAVLLQFNLIDLDDLYVHLLPADNSIMDEHKREIVEAKQIVRKLTMVVLSSEKIDEREKEKEKEEEKVEKPPDNQKLGLLEALLKIGDWQHAQNIMDQMPPYYAASHKLIALAICKLIHITIEPLYRRVGVPKGAKGSPVNALQNKRAPKQAENFEDLRRDVFNMFCYLGPHLSHDPILFAKVVRIGKSFMKEFQSDGSKSEDKEKTEVILSCLLSITDQVLLPSLSLMDCNACMSEELWGMFKTFPYQHRYRLYGQWKNETYNSHPLLVKVKAQTIDRAKYIMKRLTKENVKPSGRQIGKLSHSNPTILFDYILSQIQKYDNLITPVVDSLKYLTSLNYDVLAYCIIEALANPEKERMKHDDTTISSWLQSLASFCGAVFRKYPIDLAGLLQYVANQLKAGKSFDLLILKEVVQKMAGIEITEEMTMEQLEAMTGGEQLKAEGGYFGQIRNTKKSSQRLKDALLDHDLALPLCLLMAQQRNGVIFQEGGEKHLKLVGKLYDQCHDTLVQFGGFLASNLSTEDYIKRVPSIDVLCNEFHTPHDAAFFLSRPMYAHHISSKYDELKKSEKGSKQQHKVHKYITSCEMVMAPVHEAVVSLHVSKVWDDISPQFYATFWSLTMYDLAVPHTSYEREVNKLKIQMKAIDDNQEMPPNKKKKEKERCTALQDKLLEEEKKQMEHVQRVLQRLKLEKDNWLLAKSTKNETITKFLQLCIFPRCIFSAIDAVYCARFVELVHQQKTPNFSTLLCYDRVFSDIIYTVASCTENEASRYGRFLCCMLETVTRWHSDRATYEKECGNYPGFLTILRATGFDGGNKADQLDYENFRHVVHKWHYKLTKASVHCLETGEYTHIRNILIVLTKILPWYPKVLNLGQALERRVHKICQEEKEKRPDLYALAMGYSGQLKSRKPYMIPENEFHNKDPPPRNAVASVQNGPGGGPSSSSIGSASKSDESSTEETDKSRERSQCSVKAVNKASSATPKGNSSNGNSGSNSKAVKENEKEKGKEKEKEKKEKTPATTPEARVLGKDGKEKPKEERPNKDEKARETKERTPKSDKEKEKFKKEEKAKDEKFKTAIPNVESKSTQEKEREKEPSRERDIAKDMKSKENVKGGEKTAVSGSLKSPVPRSDIAEPEREQKRRKIDTHPSPSHSSTVKDSLIELKESSAKLYINHTPPPLSKSKEREMDKKDLDKSRERSREREKKDEKDRKERKRDHSNNDREVPPDLTKRRKEENGTMGVSKHKSESPCESPYANEKDKEKNKSKSSGKEKSSDSFKSEKMDKISSGGKKESRHDKEKIEKKEKRDSSGGKEEKKQYPFHLNNALNQCMESFDADNVLKVYSSVV.

Coiled-coil stretches lie at residues 293 to 339 (NSIM…KVEK) and 896 to 965 (HTSY…NWLL). Residues 923 to 928 (KKKKEK) carry the Nuclear localization signal motif. The disordered stretch occupies residues 1182–1586 (PENEFHNKDP…GGKEEKKQYP (405 aa)). Residues 1218–1234 (KSDESSTEETDKSRERS) show a composition bias toward basic and acidic residues. Position 1222 is a phosphoserine (S1222). Over residues 1251 to 1262 (GNSSNGNSGSNS) the composition is skewed to low complexity. Composition is skewed to basic and acidic residues over residues 1264–1284 (AVKE…KEKT), 1293–1342 (VLGK…EKFK), and 1352–1382 (STQE…KGGE). T1384 bears the Phosphothreonine mark. Phosphoserine is present on residues S1389, S1392, and S1416. Positions 1415–1424 (PSPSHSSTVK) are enriched in polar residues. Phosphothreonine is present on T1442. The span at 1448–1503 (KSKEREMDKKDLDKSRERSREREKKDEKDRKERKRDHSNNDREVPPDLTKRRKEEN) shows a compositional bias: basic and acidic residues. A phosphoserine mark is found at S1449, S1485, and S1515. The stretch at 1464–1491 (ERSREREKKDEKDRKERKRDHSNNDREV) forms a coiled coil. Basic and acidic residues predominate over residues 1523–1584 (NEKDKEKNKS…SSGGKEEKKQ (62 aa)).

This sequence belongs to the THOC2 family. In terms of assembly, component of the THO subcomplex, which is composed of THOC1, THOC2, THOC3, THOC5, THOC6 and THOC7. The THO subcomplex interacts with DDX39B to form the THO-DDX39B complex which multimerizes into a 28-subunit tetrameric assembly. Component of the transcription/export (TREX) complex at least composed of ALYREF/THOC4, DDX39B, SARNP/CIP29, CHTOP and the THO subcomplex; in the complex interacts with THOC1, THOC3, THOC5, THOC7 and DDX39B. TREX seems to have a dynamic structure involving ATP-dependent remodeling. Interacts with POLDIP3 and ZC3H11A.

The protein localises to the nucleus. Its subcellular location is the nucleus speckle. It localises to the cytoplasm. In terms of biological role, component of the THO subcomplex of the TREX complex which is thought to couple mRNA transcription, processing and nuclear export, and which specifically associates with spliced mRNA and not with unspliced pre-mRNA. Required for efficient export of polyadenylated RNA and spliced mRNA. The THOC1-THOC2-THOC3 core complex alone is sufficient to bind export factor NXF1-NXT1 and promote ATPase activity of DDX39B; in the complex THOC2 is the only component that directly interacts with DDX39B. TREX is recruited to spliced mRNAs by a transcription-independent mechanism, binds to mRNA upstream of the exon-junction complex (EJC) and is recruited in a splicing- and cap-dependent manner to a region near the 5' end of the mRNA where it functions in mRNA export to the cytoplasm via the TAP/NXF1 pathway. Required for NXF1 localization to the nuclear rim. THOC2 (and probably the THO complex) is involved in releasing mRNA from nuclear speckle domains. Plays a role for proper neuronal development. This is THO complex subunit 2 (THOC2) from Dasypus novemcinctus (Nine-banded armadillo).